A 296-amino-acid polypeptide reads, in one-letter code: MDDIETAKNLTVKARTAYSVWDVCRLFIEMIAPDVDIDIESKRKSDELLFPGYVIRPMESLTTGRPYGLDSSAEDSSVSSDSSAEVILPAAKMVKERFDSIGNGMLSSQEASQAAIDLMLQNNKLLDNRKQLYKSIAIIIGRLPEKDKKRATEMLMRKMDCTQLLVPPAPTEEDVMKLVSVVTQLLTLVPPDRQAALIGDLFIPESLKDIFNSFNELAAENRLQQKKSELEGRTEVNHANTNEEVPSRRTRSRDTNARGAYKLQNTITEGPKAVPTKKRRVATRVRGRKSRNTSRV.

Residue Met-1 is modified to N-acetylmethionine. Residues 1-57 (MDDIETAKNLTVKARTAYSVWDVCRLFIEMIAPDVDIDIESKRKSDELLFPGYVIRP) are interaction with REP1. Residues 58–296 (MESLTTGRPY…GRKSRNTSRV (239 aa)) are DNA-binding, and self-association. The tract at residues 228-296 (SELEGRTEVN…GRKSRNTSRV (69 aa)) is disordered. Basic residues predominate over residues 275–296 (PTKKRRVATRVRGRKSRNTSRV). The tract at residues 276-296 (TKKRRVATRVRGRKSRNTSRV) is nuclear localization.

Interacts with REP1.

It localises to the nucleus. Functionally, part of the plasmid partitioning system, which ensures the equal distribution of replicated plasmid molecules to daughter cells. The plasmids exist as well-organized plasmid foci within the nucleus that stay together throughout the cell-cycle and act as entity during segregation, effetively reducing copy number to one. Plasmid partitioning requires the proteins REP1, REP2, and a cis-acting locus STB (REP3). REP1-REP2 stably associate with CSE4-containing chromatin at STB during S-phase, marking the locus with a centromeric tag, and thereby probably catching mitotic spindle microtubules to the plasmid cluster and coupling plasmid segregation to chromosome segregation. REP1-REP2 are required to recruit the cohesin complex to the STB locus for pairing of the replicated plasmid cluster, a prerequisite for successful plasmid segregation. REP1-REP2 also negatively regulate expression of site-specific recombinase FLP and of RAF1. In Saccharomyces cerevisiae (strain ATCC 204508 / S288c) (Baker's yeast), this protein is Partitioning protein REP2 (REP2).